The sequence spans 307 residues: Mitochondrial glycine transporter (307 aa).

Solcar repeat units lie at residues Pro8 to Ser87, Leu115 to Leu199, and Thr221 to Arg305. The next 6 membrane-spanning stretches (helical) occupy residues Leu14–Gln39, Gly62–Leu88, Leu121–Glu146, Gly174–Lys197, Val225–Met251, and Gly280–Ile298.

This sequence belongs to the mitochondrial carrier (TC 2.A.29) family. SLC25A38 subfamily.

It localises to the mitochondrion. Its subcellular location is the mitochondrion inner membrane. It catalyses the reaction glycine(in) = glycine(out). Its function is as follows. Mitochondrial glycine transporter that imports glycine into the mitochondrial matrix. Plays an important role in providing glycine for the first enzymatic step in heme biosynthesis, the condensation of glycine with succinyl-CoA to produce 5-aminolevulinate (ALA) in the mitochondrial matrix. In Saccharomyces cerevisiae (strain ATCC 204508 / S288c) (Baker's yeast), this protein is Mitochondrial glycine transporter.